The primary structure comprises 347 residues: FK506-binding protein-like (347 aa).

The tract at residues 1–24 (METSPISPMNEKNTAQPQQREENA) is disordered. T3 carries the phosphothreonine modification. TPR repeat units follow at residues 208–241 (AKEEHRRGTELFRAGNPQGAARCYGRALRLLLTL), 250–283 (TTLYANLAACQLLLGHPQLAAQSCDRVLEREPGH), and 284–317 (LKALYRRGVARAALGDLEKATADFKKVLAVDPKN).

Forms a ternary complex with CDKN1A/p21 and HSP90AB1/Hsp90.

Functionally, may be involved in response to X-ray. Regulates p21 protein stability by binding to Hsp90 and p21. The protein is FK506-binding protein-like (Fkbpl) of Mus musculus (Mouse).